We begin with the raw amino-acid sequence, 367 residues long: uncharacterized protein (367 aa).

The next 4 membrane-spanning stretches (helical) occupy residues I18–G38, V239–G259, I296–I316, and A329–L349.

This sequence belongs to the ABC-4 integral membrane protein family.

The protein localises to the cell membrane. This is an uncharacterized protein from Methanocaldococcus jannaschii (strain ATCC 43067 / DSM 2661 / JAL-1 / JCM 10045 / NBRC 100440) (Methanococcus jannaschii).